Reading from the N-terminus, the 299-residue chain is 4-hydroxy-tetrahydrodipicolinate synthase (299 aa).

Thr-47 contributes to the pyruvate binding site. Tyr-136 (proton donor/acceptor) is an active-site residue. The Schiff-base intermediate with substrate role is filled by Lys-164. Ala-205 lines the pyruvate pocket.

The protein belongs to the DapA family. Homotetramer; dimer of dimers.

It is found in the cytoplasm. The enzyme catalyses L-aspartate 4-semialdehyde + pyruvate = (2S,4S)-4-hydroxy-2,3,4,5-tetrahydrodipicolinate + H2O + H(+). Its pathway is amino-acid biosynthesis; L-lysine biosynthesis via DAP pathway; (S)-tetrahydrodipicolinate from L-aspartate: step 3/4. Functionally, catalyzes the condensation of (S)-aspartate-beta-semialdehyde [(S)-ASA] and pyruvate to 4-hydroxy-tetrahydrodipicolinate (HTPA). This Pediococcus pentosaceus (strain ATCC 25745 / CCUG 21536 / LMG 10740 / 183-1w) protein is 4-hydroxy-tetrahydrodipicolinate synthase.